A 487-amino-acid polypeptide reads, in one-letter code: Glutamyl-tRNA(Gln) amidotransferase subunit A (487 aa).

Catalysis depends on charge relay system residues Lys76 and Ser151. The active-site Acyl-ester intermediate is the Ser175.

This sequence belongs to the amidase family. GatA subfamily. As to quaternary structure, heterotrimer of A, B and C subunits.

It carries out the reaction L-glutamyl-tRNA(Gln) + L-glutamine + ATP + H2O = L-glutaminyl-tRNA(Gln) + L-glutamate + ADP + phosphate + H(+). Functionally, allows the formation of correctly charged Gln-tRNA(Gln) through the transamidation of misacylated Glu-tRNA(Gln) in organisms which lack glutaminyl-tRNA synthetase. The reaction takes place in the presence of glutamine and ATP through an activated gamma-phospho-Glu-tRNA(Gln). The protein is Glutamyl-tRNA(Gln) amidotransferase subunit A of Azoarcus sp. (strain BH72).